A 571-amino-acid polypeptide reads, in one-letter code: Cytochrome P450 monooxygenase g430 (571 aa).

A helical transmembrane segment spans residues 8–28; the sequence is GALIWVVTSYILYAIISNFII. C471 is a heme binding site. The disordered stretch occupies residues 552 to 571; sequence CPLPAEAKLPKSRKPIGTAS.

The protein belongs to the cytochrome P450 family. Heme serves as cofactor.

It localises to the membrane. It functions in the pathway mycotoxin biosynthesis. Its function is as follows. Cytochrome P450 monooxygenase; part of the gene cluster that mediates the biosynthesis of 1233A, a natural compound known as an inhibitor of HMG-CoA synthase in the mevalonate pathway and with antibacterial and antifungal activities. The highly reducing polyketide synthase g433 is responsible for the 1233A backbone biosynthesis and the cytochrome P450 monooxygenase g430 catalyzes oxidation of the backbone. This Fusarium sp protein is Cytochrome P450 monooxygenase g430.